The sequence spans 317 residues: NADH-ubiquinone oxidoreductase chain 1 (317 aa).

9 helical membrane-spanning segments follow: residues 3–23, 37–57, 69–89, 103–123, 141–161, 173–193, 207–227, 247–267, and 282–302; these read YIEL…LTVA, PNAV…KLLL, LILF…WSVI, GFIL…LAGW, LISY…IGGT, AIWY…GCVA, SELV…LFFL, GGTG…YIWV, and LCWM…PAYL.

This sequence belongs to the complex I subunit 1 family.

It is found in the mitochondrion inner membrane. It catalyses the reaction a ubiquinone + NADH + 5 H(+)(in) = a ubiquinol + NAD(+) + 4 H(+)(out). Core subunit of the mitochondrial membrane respiratory chain NADH dehydrogenase (Complex I) that is believed to belong to the minimal assembly required for catalysis. Complex I functions in the transfer of electrons from NADH to the respiratory chain. The immediate electron acceptor for the enzyme is believed to be ubiquinone. In Candida albicans (strain SC5314 / ATCC MYA-2876) (Yeast), this protein is NADH-ubiquinone oxidoreductase chain 1 (NAD1).